A 150-amino-acid chain; its full sequence is MSDWDKPTVIGFRQQKPTVAKGSTLNAAQRAGLVISSESKGAGQSKGPADHQRIAKLDRDDAPKPPEKVSADVGKAVATARMAIKNAEGKSMTQKELATSVNAKPQDIADLESGRAVPDQALLGKLERKLNVKLRGAKNLIGTPLHPKKK.

A disordered region spans residues 36–71 (SSESKGAGQSKGPADHQRIAKLDRDDAPKPPEKVSA). Residues 48 to 70 (PADHQRIAKLDRDDAPKPPEKVS) show a composition bias toward basic and acidic residues. In terms of domain architecture, HTH cro/C1-type spans 84 to 137 (IKNAEGKSMTQKELATSVNAKPQDIADLESGRAVPDQALLGKLERKLNVKLRGA). The H-T-H motif DNA-binding region spans 94–113 (QKELATSVNAKPQDIADLES).

Belongs to the MBF1 family.

Functionally, transcriptional coactivator that stimulates GCN4-dependent transcriptional activity by bridging the DNA-binding region of GCN4 and TBP (SPT15), thereby recruiting TBP to GCN4-bound promoters. Involved in induction of the ribosome quality control (RQC) pathway; a pathway that degrades nascent peptide chains during problematic translation. Required to prevent stalled ribosomes from frameshifting. The chain is Multiprotein-bridging factor 1 (MBF1) from Cryptococcus neoformans var. neoformans serotype D (strain B-3501A) (Filobasidiella neoformans).